A 306-amino-acid polypeptide reads, in one-letter code: BRCA2 and CDKN1A-interacting protein (306 aa).

The span at 1-10 (MASRPKRRAV) shows a compositional bias: basic residues. The disordered stretch occupies residues 1–45 (MASRPKRRAVSRVPPALGDEEEEDEVEEQDEDDSDEEEDEEDEVV). Acidic residues predominate over residues 18-45 (GDEEEEDEVEEQDEDDSDEEEDEEDEVV). A phosphoserine mark is found at Ser34 and Ser104. An interaction with BRCA2 region spans residues 51–159 (IEFEAYSISD…EKSMVEQLDR (109 aa)). An interaction with CDKN1A region spans residues 153–251 (MVEQLDRLFN…NAEEEFFYEK (99 aa)). Phosphoserine is present on Ser273.

The protein belongs to the BCP1 family. As to quaternary structure, interacts with BRCA2, CDKN1A and MTDH/LYRIC. Interacts with DCTN1/p150-glued and ACTR1A/ARP1. Interacts with alpha-, beta- and gamma-tubulins. Interacts with TENT5C; the interaction has no effect on TENT5C poly(A) polymerase function.

It localises to the nucleus. The protein resides in the cytoplasm. Its subcellular location is the cytoskeleton. It is found in the microtubule organizing center. The protein localises to the centrosome. It localises to the centriole. The protein resides in the spindle pole. Functionally, during interphase, required for microtubule organizing and anchoring activities. During mitosis, required for the organization and stabilization of the spindle pole. May promote cell cycle arrest by enhancing the inhibition of CDK2 activity by CDKN1A. May be required for repair of DNA damage by homologous recombination in conjunction with BRCA2. May not be involved in non-homologous end joining (NHEJ). The protein is BRCA2 and CDKN1A-interacting protein (BCCIP) of Bos taurus (Bovine).